Consider the following 547-residue polypeptide: CDK5RAP1-like protein (547 aa).

Residues 79-194 form the MTTase N-terminal domain; it reads RTVCYVTYGC…LPRLVAVAAG (116 aa). Residues cysteine 88, cysteine 124, cysteine 157, cysteine 232, cysteine 236, and cysteine 239 each contribute to the [4Fe-4S] cluster site. Positions 218-475 constitute a Radical SAM core domain; the sequence is DSASKTAFIS…TTVFREEALK (258 aa). The region spanning 478-543 is the TRAM domain; the sequence is QALIGSEQTV…SQTLKAQLIG (66 aa).

It belongs to the methylthiotransferase family. MiaB subfamily. [4Fe-4S] cluster serves as cofactor.

In terms of biological role, potential regulator of CDK5 activity. The polypeptide is CDK5RAP1-like protein (Caenorhabditis elegans).